Reading from the N-terminus, the 380-residue chain is Homeobox protein ceh-6 (380 aa).

Positions 1-25 are enriched in low complexity; sequence MLIPSSSSIPSSLSASASDSEPSSL. Disordered regions lie at residues 1–31, 167–190, and 265–286; these read MLIP…SGIS, SGSV…SEQT, and GSPN…KKRT. The 75-residue stretch at 187 to 261 folds into the POU-specific domain; it reads SEQTCPDDLE…LLFKWLEEAD (75 aa). Positions 281-340 form a DNA-binding region, homeobox; sequence KRKKRTSIEVNVKSRLEFHFQSNQKPNAQEITQVAMELQLEKEVVRVWFCNRRQKEKRIA.

This sequence belongs to the POU transcription factor family. Class-3 subfamily. In terms of assembly, interacts with egl-27, sox-2 and sem-4. Interacts with wdr-5.1. In terms of tissue distribution, expressed in a series of neurons in the ring ganglia, excretory cell, dividing neuroblasts in the ventral cord and rectal cells.

The protein resides in the nucleus. Functionally, vital for embryonic development and essential for the proper function of the excretory cell. Required for the transdifferentiation of the Y rectal epithelial cell to the PDA motor neuron during larval development. The chain is Homeobox protein ceh-6 from Caenorhabditis elegans.